The chain runs to 200 residues: Holliday junction branch migration complex subunit RuvA (200 aa).

A domain I region spans residues 1 to 65; it reads MYEYIKGTLT…ETEHVLYGFS (65 aa). Residues 66 to 144 form a domain II region; sequence SRAERECFRL…TLMPLYLEEP (79 aa). The segment at 145-149 is flexible linker; the sequence is VVPSS. The segment at 150–200 is domain III; the sequence is TANSSFKEGIGALMNLGFSRLAADRMMTEAVKELSEEASVAELLPIALRKS.

The protein belongs to the RuvA family. Homotetramer. Forms an RuvA(8)-RuvB(12)-Holliday junction (HJ) complex. HJ DNA is sandwiched between 2 RuvA tetramers; dsDNA enters through RuvA and exits via RuvB. An RuvB hexamer assembles on each DNA strand where it exits the tetramer. Each RuvB hexamer is contacted by two RuvA subunits (via domain III) on 2 adjacent RuvB subunits; this complex drives branch migration. In the full resolvosome a probable DNA-RuvA(4)-RuvB(12)-RuvC(2) complex forms which resolves the HJ.

The protein resides in the cytoplasm. The RuvA-RuvB-RuvC complex processes Holliday junction (HJ) DNA during genetic recombination and DNA repair, while the RuvA-RuvB complex plays an important role in the rescue of blocked DNA replication forks via replication fork reversal (RFR). RuvA specifically binds to HJ cruciform DNA, conferring on it an open structure. The RuvB hexamer acts as an ATP-dependent pump, pulling dsDNA into and through the RuvAB complex. HJ branch migration allows RuvC to scan DNA until it finds its consensus sequence, where it cleaves and resolves the cruciform DNA. This is Holliday junction branch migration complex subunit RuvA from Chlamydia trachomatis serovar L2 (strain ATCC VR-902B / DSM 19102 / 434/Bu).